Reading from the N-terminus, the 165-residue chain is Protein phosphatase 1 regulatory subunit 14C (165 aa).

The segment covering Met-1–Gly-12 has biased composition (low complexity). The segment at Met-1–Thr-73 is disordered. Ser-2 bears the N-acetylserine mark. The residue at position 25 (Ser-25) is a Phosphoserine. Omega-N-methylarginine is present on Arg-27. Residue Ser-33 is modified to Phosphoserine. Positions Gly-35–Gln-63 are enriched in low complexity. Thr-73 is subject to Phosphothreonine; by ILK1.

Belongs to the PP1 inhibitor family. Post-translationally, has over 600-fold higher inhibitory activity when phosphorylated, creating a molecular switch for regulating the phosphorylation status of PPP1CA substrates and smooth muscle contraction. The main inhibitory site appears to be Thr-73. In terms of tissue distribution, detected in breast cancer.

It is found in the cytoplasm. It localises to the membrane. Functionally, inhibitor of the PP1 regulatory subunit PPP1CA. This is Protein phosphatase 1 regulatory subunit 14C (PPP1R14C) from Homo sapiens (Human).